The following is a 497-amino-acid chain: Probable malate:quinone oxidoreductase (497 aa).

The protein belongs to the MQO family. The cofactor is FAD.

It carries out the reaction (S)-malate + a quinone = a quinol + oxaloacetate. The protein operates within carbohydrate metabolism; tricarboxylic acid cycle; oxaloacetate from (S)-malate (quinone route): step 1/1. The protein is Probable malate:quinone oxidoreductase of Flavobacterium johnsoniae (strain ATCC 17061 / DSM 2064 / JCM 8514 / BCRC 14874 / CCUG 350202 / NBRC 14942 / NCIMB 11054 / UW101) (Cytophaga johnsonae).